A 303-amino-acid polypeptide reads, in one-letter code: Probable cell division protein WhiA (303 aa).

The H-T-H motif DNA-binding region spans 272 to 303; that stretch reads SIQQLADSLSTPLTKSGVNHRLRKINKIADEL.

The protein belongs to the WhiA family.

In terms of biological role, involved in cell division and chromosome segregation. The sequence is that of Probable cell division protein WhiA from Streptococcus pneumoniae (strain Hungary19A-6).